A 337-amino-acid polypeptide reads, in one-letter code: Arylacetonitrilase (337 aa).

Residues 7–278 (VRVAVTQHEP…EGFVYADLDL (272 aa)) form the CN hydrolase domain. The active-site Proton acceptor is the Glu47. Lys127 is a catalytic residue. Cys162 serves as the catalytic Nucleophile. A disordered region spans residues 311 to 337 (QHRPEGQADNAAYGLDVPSGLVEEEGA).

This sequence belongs to the carbon-nitrogen hydrolase superfamily. Nitrilase family.

It catalyses the reaction a nitrile + 2 H2O = a carboxylate + NH4(+). The catalysed reaction is 4-chlorophenylacetonitrile + 2 H2O = 4-chlorophenylacetate + NH4(+). Functionally, nitrilase that hydrolyzes preferentially phenylacetonitrile, but also (R,S)-mandelonitrile, and 2-phenylpropionitrile. The protein is Arylacetonitrilase of Aspergillus niger (strain ATCC MYA-4892 / CBS 513.88 / FGSC A1513).